The primary structure comprises 797 residues: Complex I intermediate-associated protein 84, mitochondrial (797 aa).

A mitochondrion-targeting transit peptide spans 1–69 (MRSHLARNAT…ALCTRTSKRT (69 aa)).

The protein resides in the mitochondrion. Its function is as follows. Chaperone protein involved in the assembly of the mitochondrial NADH:ubiquinone oxidoreductase complex (complex I). This chain is Complex I intermediate-associated protein 84, mitochondrial (cia84), found in Neurospora crassa (strain ATCC 24698 / 74-OR23-1A / CBS 708.71 / DSM 1257 / FGSC 987).